The sequence spans 205 residues: SCO2-like protein RF_0960 (205 aa).

Residues C82, C86, and H172 each coordinate Cu cation.

The protein belongs to the SCO1/2 family.

The chain is SCO2-like protein RF_0960 from Rickettsia felis (strain ATCC VR-1525 / URRWXCal2) (Rickettsia azadi).